A 112-amino-acid chain; its full sequence is Integration host factor subunit alpha (112 aa).

This sequence belongs to the bacterial histone-like protein family. In terms of assembly, heterodimer of an alpha and a beta chain.

In terms of biological role, this protein is one of the two subunits of integration host factor, a specific DNA-binding protein that functions in genetic recombination as well as in transcriptional and translational control. The sequence is that of Integration host factor subunit alpha from Sinorhizobium fredii (strain NBRC 101917 / NGR234).